A 1355-amino-acid chain; its full sequence is DNA-directed RNA polymerase subunit beta' (1355 aa).

Residues Cys219, Cys293, Cys300, and Cys303 each contribute to the Zn(2+) site. The interval 1331–1355 is disordered; the sequence is AEVEVDDEVDDDYEDDDEDDDDYED.

Belongs to the RNA polymerase beta' chain family. RpoC2 subfamily. In cyanobacteria the RNAP catalytic core is composed of 2 alpha, 1 beta, 1 beta', 1 gamma and 1 omega subunit. When a sigma factor is associated with the core the holoenzyme is formed, which can initiate transcription. It depends on Zn(2+) as a cofactor.

It carries out the reaction RNA(n) + a ribonucleoside 5'-triphosphate = RNA(n+1) + diphosphate. Functionally, DNA-dependent RNA polymerase catalyzes the transcription of DNA into RNA using the four ribonucleoside triphosphates as substrates. This chain is DNA-directed RNA polymerase subunit beta', found in Trichormus variabilis (strain ATCC 29413 / PCC 7937) (Anabaena variabilis).